The chain runs to 120 residues: Thiosulfate sulfurtransferase 16, chloroplastic (120 aa).

Residues 20–120 (LLAGHRYLDV…WAKNGLPTKA (101 aa)) enclose the Rhodanese domain. Residue Cys80 is the Cysteine persulfide intermediate of the active site. Arg85 is a binding site for substrate.

As to quaternary structure, monomer.

The protein localises to the plastid. Its subcellular location is the chloroplast. The catalysed reaction is thiosulfate + hydrogen cyanide = thiocyanate + sulfite + 2 H(+). Its function is as follows. Thought to act during the early stages of leaf senescence. Catalyzes the transfer of a sulfur ion from a donor to cyanide or to other thiol compounds. Substrate preference is thiosulfate &gt; 3-mercaptopyruvate. In Arabidopsis thaliana (Mouse-ear cress), this protein is Thiosulfate sulfurtransferase 16, chloroplastic (STR16).